Here is a 319-residue protein sequence, read N- to C-terminus: Methionyl-tRNA formyltransferase (319 aa).

A (6S)-5,6,7,8-tetrahydrofolate-binding site is contributed by 110-113 (SLLP).

The protein belongs to the Fmt family.

It catalyses the reaction L-methionyl-tRNA(fMet) + (6R)-10-formyltetrahydrofolate = N-formyl-L-methionyl-tRNA(fMet) + (6S)-5,6,7,8-tetrahydrofolate + H(+). Its function is as follows. Attaches a formyl group to the free amino group of methionyl-tRNA(fMet). The formyl group appears to play a dual role in the initiator identity of N-formylmethionyl-tRNA by promoting its recognition by IF2 and preventing the misappropriation of this tRNA by the elongation apparatus. This chain is Methionyl-tRNA formyltransferase, found in Geobacillus thermodenitrificans (strain NG80-2).